The following is a 181-amino-acid chain: Salmonella anti-inflammatory response activator (181 aa).

Residues 4 to 24 (FVYIYILVIYGSYLWFSLGGN) form a helical membrane-spanning segment.

In terms of assembly, interacts with host (human) STAT3.

It is found in the membrane. The protein resides in the host cytoplasm. In terms of biological role, a Salmonella strain-specific effector that induces a host STAT3-dependent anti-inflammatory pathway. In bacteria-infected host cells (human) leads to phosphorylation of host STAT3, at least on 'Tyr-705' and interleukin-10 (IL-10, IL10) production; expressing the gene alone in host cells induces STAT3 phosphorylation and IL-10 production. IL-10 production requires STAT3 in infected cells. Contributes to virulence in mouse infection models. Encoded in only a few S.typhimurium serovars, it may be a specific effector for adaptation to bovine hosts. The sequence is that of Salmonella anti-inflammatory response activator from Salmonella typhimurium (strain 14028s / SGSC 2262).